The primary structure comprises 415 residues: Leucine-rich repeat-containing protein 34 (415 aa).

LRR repeat units follow at residues 246 to 272 (TLRY…LKSN) and 274 to 296 (TLEV…LSET).

Interacts with NPM1 and NCL.

The protein localises to the nucleus. It is found in the nucleolus. The protein resides in the cytoplasm. Functionally, highly expressed in stem cells where it may be involved in regulation of pluripotency. In embryonic stem cells (ESCs), important for normal expression of the pluripotency regulators POU5F1/OCT4 and KLF4. Also important for expression of the ectodermal marker gene NES and the endodermal marker gene GATA4. Promotes stem cell proliferation in vitro. The sequence is that of Leucine-rich repeat-containing protein 34 (Lrrc34) from Rattus norvegicus (Rat).